The primary structure comprises 482 residues: L-propargylglycine--L-glutamate ligase (482 aa).

The enzyme catalyses L-propargylglycine + L-glutamate + ATP = L-gamma-glutamyl-L-propargylglycine + ADP + phosphate + H(+). It participates in amino-acid metabolism. Its pathway is antibiotic biosynthesis. Its function is as follows. Involved in the biosynthesis of terminal alkyne-containing amino acids such as L-beta-ethynylserine, that are produced as antibiotics by S.cattleya. Catalyzes the ATP-dependent ligation of L-propargylglycine to L-glutamate to form the dipeptide L-gamma-glutamyl-L-propargylglycine. Is selective for L-propargylglycine over norvaline, allylglycine and the standard proteinogenic amino acids, except L-cysteine which can be used as a substrate to a lesser extent. The sequence is that of L-propargylglycine--L-glutamate ligase from Streptantibioticus cattleyicolor (strain ATCC 35852 / DSM 46488 / JCM 4925 / NBRC 14057 / NRRL 8057) (Streptomyces cattleya).